The primary structure comprises 365 residues: Eukaryotic translation initiation factor 3 subunit H (365 aa).

The MPN domain maps to 11 to 160; it reads VKVEALVVMK…LRAFRLSPKF (150 aa).

The protein belongs to the eIF-3 subunit H family. Component of the eukaryotic translation initiation factor 3 (eIF-3) complex.

It localises to the cytoplasm. Its function is as follows. Component of the eukaryotic translation initiation factor 3 (eIF-3) complex, which is involved in protein synthesis of a specialized repertoire of mRNAs and, together with other initiation factors, stimulates binding of mRNA and methionyl-tRNAi to the 40S ribosome. The eIF-3 complex specifically targets and initiates translation of a subset of mRNAs involved in cell proliferation. The sequence is that of Eukaryotic translation initiation factor 3 subunit H from Aspergillus fumigatus (strain CBS 144.89 / FGSC A1163 / CEA10) (Neosartorya fumigata).